Reading from the N-terminus, the 505-residue chain is Deoxyguanosinetriphosphate triphosphohydrolase (505 aa).

The region spanning 66–273 is the HD domain; sequence RLTHSMEVQQ…MEAADDISYC (208 aa).

The protein belongs to the dGTPase family. Type 1 subfamily. As to quaternary structure, homotetramer. Mg(2+) is required as a cofactor.

The enzyme catalyses dGTP + H2O = 2'-deoxyguanosine + triphosphate + H(+). In terms of biological role, dGTPase preferentially hydrolyzes dGTP over the other canonical NTPs. The protein is Deoxyguanosinetriphosphate triphosphohydrolase of Salmonella enteritidis PT4 (strain P125109).